The sequence spans 287 residues: Bifunctional protein FolD (287 aa).

NADP(+) contacts are provided by residues 165–167, Ser-190, and Ile-231; that span reads GRS.

This sequence belongs to the tetrahydrofolate dehydrogenase/cyclohydrolase family. Homodimer.

The enzyme catalyses (6R)-5,10-methylene-5,6,7,8-tetrahydrofolate + NADP(+) = (6R)-5,10-methenyltetrahydrofolate + NADPH. The catalysed reaction is (6R)-5,10-methenyltetrahydrofolate + H2O = (6R)-10-formyltetrahydrofolate + H(+). It functions in the pathway one-carbon metabolism; tetrahydrofolate interconversion. Its function is as follows. Catalyzes the oxidation of 5,10-methylenetetrahydrofolate to 5,10-methenyltetrahydrofolate and then the hydrolysis of 5,10-methenyltetrahydrofolate to 10-formyltetrahydrofolate. The chain is Bifunctional protein FolD from Trichodesmium erythraeum (strain IMS101).